Consider the following 466-residue polypeptide: MSVVPVVDVLQGRVAVDSEVTVRGWVRTRRDSKAGISFIAVYDGSCFNPLQAVVNNNLSNYQDDVLRLTTGCSVEITGNVVASPGEGQSFELQATNVNVVGWVDDPDTYPMAAKRHSIEYLREVAHLRPRTNLIGAVARVRHTLAQAIHRFFHENGYFWVSTPLITASDTEGAGEMFRVSTLDMENLPRTEQGKVDFSKDFFGKEAFLTVSGQLNGETYACALSNVYTFGPTFRAENSNTARHLAEFWMIEPEVAFASLDDVAALAENLLKYVFQAVLNERADDMAFFAERVDKEAVTRLEKFVSSDFAQVDYTDAVEILLNCGQQFENPVYWGVDLSSEHERYLAEQHFKAPVVVKNYPKDIKAFYMRMNDDGKTVAAMDVLAPGIGEIIGGSQREERLAALDSRLEEMGLNKEDYWWYRDLRRYGTIPHSGFGLGFERLIAYVTGVQNVRDVIPFPRTPRNASF.

Belongs to the class-II aminoacyl-tRNA synthetase family. As to quaternary structure, homodimer.

It is found in the cytoplasm. The catalysed reaction is tRNA(Asn) + L-asparagine + ATP = L-asparaginyl-tRNA(Asn) + AMP + diphosphate + H(+). The polypeptide is Asparagine--tRNA ligase (Pectobacterium atrosepticum (strain SCRI 1043 / ATCC BAA-672) (Erwinia carotovora subsp. atroseptica)).